A 238-amino-acid polypeptide reads, in one-letter code: Ribonuclease PH (238 aa).

Residues Arg-86 and 124 to 126 contribute to the phosphate site; that span reads GTR.

Belongs to the RNase PH family. Homohexameric ring arranged as a trimer of dimers.

It catalyses the reaction tRNA(n+1) + phosphate = tRNA(n) + a ribonucleoside 5'-diphosphate. Its function is as follows. Phosphorolytic 3'-5' exoribonuclease that plays an important role in tRNA 3'-end maturation. Removes nucleotide residues following the 3'-CCA terminus of tRNAs; can also add nucleotides to the ends of RNA molecules by using nucleoside diphosphates as substrates, but this may not be physiologically important. Probably plays a role in initiation of 16S rRNA degradation (leading to ribosome degradation) during starvation. This is Ribonuclease PH from Yersinia pseudotuberculosis serotype O:1b (strain IP 31758).